Here is a 142-residue protein sequence, read N- to C-terminus: Large ribosomal subunit protein uL13 (142 aa).

The protein belongs to the universal ribosomal protein uL13 family. As to quaternary structure, part of the 50S ribosomal subunit.

This protein is one of the early assembly proteins of the 50S ribosomal subunit, although it is not seen to bind rRNA by itself. It is important during the early stages of 50S assembly. This Aliivibrio fischeri (strain ATCC 700601 / ES114) (Vibrio fischeri) protein is Large ribosomal subunit protein uL13.